We begin with the raw amino-acid sequence, 87 residues long: HssA/B-like protein 31 (87 aa).

This sequence belongs to the hssA/B family.

The chain is HssA/B-like protein 31 (hssl31) from Dictyostelium discoideum (Social amoeba).